A 332-amino-acid chain; its full sequence is ADP-L-glycero-D-manno-heptose-6-epimerase (332 aa).

Residues 10–11 (MI), 31–32 (DK), K38, K53, 75–79 (MGACS), and N92 contribute to the NADP(+) site. The Proton acceptor role is filled by Y145. An NADP(+)-binding site is contributed by K149. N173 contacts substrate. Residues V174 and K182 each contribute to the NADP(+) site. Catalysis depends on K182, which acts as the Proton acceptor. Substrate contacts are provided by residues R184, H191, 205-208 (FKSY), R219, and Y290.

The protein belongs to the NAD(P)-dependent epimerase/dehydratase family. HldD subfamily. As to quaternary structure, homopentamer. NADP(+) is required as a cofactor.

It catalyses the reaction ADP-D-glycero-beta-D-manno-heptose = ADP-L-glycero-beta-D-manno-heptose. Its pathway is nucleotide-sugar biosynthesis; ADP-L-glycero-beta-D-manno-heptose biosynthesis; ADP-L-glycero-beta-D-manno-heptose from D-glycero-beta-D-manno-heptose 7-phosphate: step 4/4. Functionally, catalyzes the interconversion between ADP-D-glycero-beta-D-manno-heptose and ADP-L-glycero-beta-D-manno-heptose via an epimerization at carbon 6 of the heptose. The chain is ADP-L-glycero-D-manno-heptose-6-epimerase from Fusobacterium nucleatum subsp. nucleatum (strain ATCC 25586 / DSM 15643 / BCRC 10681 / CIP 101130 / JCM 8532 / KCTC 2640 / LMG 13131 / VPI 4355).